The primary structure comprises 335 residues: MDERIISSETVDAEEVSFETSLRPQTLSQYIGQDKVKNNLTVFIEAATLRNEALDHVLLYGPPGLGKTTLAMVIASEMGSQIKTTSGPAIERPGDLATILTSLEPGDVLFIDEIHRLSRAIEEILYPAMEDYCLDIVIGTGPTARSVRLDLPPFTLIGATTRAGLLSAPLRDRFGVIDHLEFYTEEQLTEIVLRTSNILDTKIDDLGAREIARRSRGTPRIANRLLKRVRDFAQVRGNGTVTEKLAKEALTLLQVDPRGLDTIDQKLLHTIIQSFRGGPVGLDTIAASIGEERETIEDMQEPYLLQIGFLQRTPRGRIATETAYNHLGISYEKEV.

Positions Met1–Tyr183 are large ATPase domain (RuvB-L). Residues Leu22, Arg23, Gly64, Lys67, Thr68, Thr69, Glu130–Tyr132, Arg173, Tyr183, and Arg220 contribute to the ATP site. Mg(2+) is bound at residue Thr68. The small ATPAse domain (RuvB-S) stretch occupies residues Thr184–Gln254. The segment at Pro257–Val335 is head domain (RuvB-H). The DNA site is built by Arg293, Arg312, and Arg317.

The protein belongs to the RuvB family. In terms of assembly, homohexamer. Forms an RuvA(8)-RuvB(12)-Holliday junction (HJ) complex. HJ DNA is sandwiched between 2 RuvA tetramers; dsDNA enters through RuvA and exits via RuvB. An RuvB hexamer assembles on each DNA strand where it exits the tetramer. Each RuvB hexamer is contacted by two RuvA subunits (via domain III) on 2 adjacent RuvB subunits; this complex drives branch migration. In the full resolvosome a probable DNA-RuvA(4)-RuvB(12)-RuvC(2) complex forms which resolves the HJ.

The protein localises to the cytoplasm. The catalysed reaction is ATP + H2O = ADP + phosphate + H(+). In terms of biological role, the RuvA-RuvB-RuvC complex processes Holliday junction (HJ) DNA during genetic recombination and DNA repair, while the RuvA-RuvB complex plays an important role in the rescue of blocked DNA replication forks via replication fork reversal (RFR). RuvA specifically binds to HJ cruciform DNA, conferring on it an open structure. The RuvB hexamer acts as an ATP-dependent pump, pulling dsDNA into and through the RuvAB complex. RuvB forms 2 homohexamers on either side of HJ DNA bound by 1 or 2 RuvA tetramers; 4 subunits per hexamer contact DNA at a time. Coordinated motions by a converter formed by DNA-disengaged RuvB subunits stimulates ATP hydrolysis and nucleotide exchange. Immobilization of the converter enables RuvB to convert the ATP-contained energy into a lever motion, pulling 2 nucleotides of DNA out of the RuvA tetramer per ATP hydrolyzed, thus driving DNA branch migration. The RuvB motors rotate together with the DNA substrate, which together with the progressing nucleotide cycle form the mechanistic basis for DNA recombination by continuous HJ branch migration. Branch migration allows RuvC to scan DNA until it finds its consensus sequence, where it cleaves and resolves cruciform DNA. This is Holliday junction branch migration complex subunit RuvB from Listeria monocytogenes serotype 4a (strain HCC23).